A 938-amino-acid polypeptide reads, in one-letter code: Protein O-mannosyl-transferase Tmtc2 (938 aa).

Position 1 (Met-1) is a topological domain, cytoplasmic. The helical transmembrane segment at 2–22 threads the bilayer; it reads PSLEPWLWGDSCSWLGMLAML. The Extracellular segment spans residues 23 to 34; the sequence is RLRLHKSNMDFT. Residues 35–55 form a helical membrane-spanning segment; the sequence is CLFCCSLAFVLYLNTLGAGFV. Topologically, residues 56 to 108 are cytoplasmic; sequence YDDRRAILANADVSGGTPWQRSFSNDFWGTPLTDSGSHGSWRPLCVLSFRLNY. A helical transmembrane segment spans residues 109–129; the sequence is LIGGGFAPWGFHLVNNLLHCV. Over 130–139 the chain is Extracellular; sequence ATALVVRVAR. Residues 140–160 form a helical membrane-spanning segment; the sequence is TLLASVWAVLAAGALFAAHPI. The Cytoplasmic portion of the chain corresponds to 161–164; that stretch reads HTEA. The chain crosses the membrane as a helical span at residues 165–185; sequence VAGVVGRADLAACVCYLLTYL. Over 186–208 the chain is Extracellular; it reads SYLRHMRWRESGDPRQWLALGAT. The helical transmembrane segment at 209–229 threads the bilayer; the sequence is LILAAAGLLCKETAITALLVC. Over 230–249 the chain is Cytoplasmic; sequence ALFDVMRGLSGQVDKQRLRS. Residues 250 to 270 traverse the membrane as a helical segment; that stretch reads VCIVLGALFCMAYCRLVIVPG. Residues 271–291 are Extracellular-facing; that stretch reads PQTAFSSADNPIARTPSAWTR. The helical transmembrane segment at 292–312 threads the bilayer; sequence LLTFLYLPVFNLRLLLQPNVL. Topologically, residues 313 to 510 are cytoplasmic; sequence SFDWGMDALP…HACVLIMSLS (198 aa). Positions 450-480 are disordered; sequence RSSSSCSNSTNSSSSSSSSSSSSSSSSSSLS. A helical membrane pass occupies residues 511 to 531; it reads FLALPFLPASNLLFYVGFVVA. Residues 532-533 are Extracellular-facing; that stretch reads ER. A helical membrane pass occupies residues 534 to 554; the sequence is LLYLPSVGFCLLVGYGVSKLM. The Cytoplasmic segment spans residues 555–562; the sequence is SCNQRTRN. The chain crosses the membrane as a helical span at residues 563–580; sequence ILLLSFSLLLAAMSLRTL. Residues 581–938 are Extracellular-facing; that stretch reads RRNADWRDEE…NLAKLGVTNV (358 aa). TPR repeat units lie at residues 602–635, 636–669, 670–703, 715–748, 753–786, 788–821, 822–855, 856–889, and 890–923; these read PKAL…RPNM, ADVH…RPNL, AVAY…DGAA, SSAY…LPGL, EILY…QPNQ, AAHL…APEQ, ASVY…APND, YTLV…RPGD, and AHAH…QPGD. N-linked (GlcNAc...) asparagine glycosylation is present at Asn-800.

The protein belongs to the TMTC family.

The protein localises to the membrane. Its subcellular location is the endoplasmic reticulum. The catalysed reaction is a di-trans,poly-cis-dolichyl beta-D-mannosyl phosphate + L-seryl-[protein] = 3-O-(alpha-D-mannosyl)-L-seryl-[protein] + a di-trans,poly-cis-dolichyl phosphate + H(+). It carries out the reaction a di-trans,poly-cis-dolichyl beta-D-mannosyl phosphate + L-threonyl-[protein] = 3-O-(alpha-D-mannosyl)-L-threonyl-[protein] + a di-trans,poly-cis-dolichyl phosphate + H(+). Its pathway is protein modification; protein glycosylation. Transfers mannosyl residues to the hydroxyl group of serine or threonine residues. The chain is Protein O-mannosyl-transferase Tmtc2 from Drosophila melanogaster (Fruit fly).